The sequence spans 135 residues: Lymphocyte antigen 6B (135 aa).

Positions 1-26 are cleaved as a signal peptide; sequence MNRSCAMKSCVLILLLALLCAERAQG. One can recognise a UPAR/Ly6 domain in the interval 27-119; sequence LNCYNCTMIP…PTGGSTWTMA (93 aa). 5 disulfide bridges follow: Cys-29/Cys-54, Cys-32/Cys-41, Cys-47/Cys-75, Cys-79/Cys-99, and Cys-100/Cys-105. Gly-113 carries GPI-anchor amidated glycine lipidation. Positions 114–135 are cleaved as a propeptide — removed in mature form; it reads STWTMAGVLLFILGSVLLQTLL.

Its subcellular location is the cell membrane. This chain is Lymphocyte antigen 6B (Ly6b), found in Rattus norvegicus (Rat).